Here is a 335-residue protein sequence, read N- to C-terminus: Anthranilate phosphoribosyltransferase (335 aa).

Residues glycine 82, 85 to 86 (GD), threonine 90, 92 to 95 (NIST), 110 to 118 (KHGGRSVSS), and serine 122 each bind 5-phospho-alpha-D-ribose 1-diphosphate. Glycine 82 serves as a coordination point for anthranilate. Serine 94 is a binding site for Mg(2+). Arginine 168 is an anthranilate binding site. Mg(2+) is bound by residues aspartate 226 and glutamate 227.

Belongs to the anthranilate phosphoribosyltransferase family. Homodimer. Mg(2+) is required as a cofactor.

The enzyme catalyses N-(5-phospho-beta-D-ribosyl)anthranilate + diphosphate = 5-phospho-alpha-D-ribose 1-diphosphate + anthranilate. It participates in amino-acid biosynthesis; L-tryptophan biosynthesis; L-tryptophan from chorismate: step 2/5. Its function is as follows. Catalyzes the transfer of the phosphoribosyl group of 5-phosphorylribose-1-pyrophosphate (PRPP) to anthranilate to yield N-(5'-phosphoribosyl)-anthranilate (PRA). This is Anthranilate phosphoribosyltransferase from Francisella philomiragia subsp. philomiragia (strain ATCC 25017 / CCUG 19701 / FSC 153 / O#319-036).